A 628-amino-acid chain; its full sequence is Nucleoside-triphosphatase 1 (628 aa).

The first 25 residues, 1–25, serve as a signal peptide directing secretion; the sequence is MWLPVYVPLLLVFGVSLSLPQGSLG. Catalysis depends on Glu236, which acts as the Proton acceptor. A glycan (N-linked (GlcNAc...) asparagine) is linked at Asn432.

It belongs to the GDA1/CD39 NTPase family. In terms of assembly, homotetramer.

It localises to the secreted. The protein localises to the parasitophorous vacuole. It carries out the reaction a ribonucleoside 5'-triphosphate + H2O = a ribonucleoside 5'-diphosphate + phosphate + H(+). Its function is as follows. May perform an important processing step in the conversion of high energy nucleotides prior to uptake by the parasite and may contribute to intracellular survival and virulence. NTPAse-I has a specific activity 4.5-fold higher than NTPAse-II in hydrolysis of ATP. The primary difference between these isozymes lies in their ability to hydrolyze nucleoside triphosphate versus diphosphate substrates. While NTPAse-II hydrolyzes ATP to ADP and ADP to AMP at almost the same rate, NTPAse-I hydrolyzes ADP to AMP at a much slower rate (0.7% of the rate for ATP). This chain is Nucleoside-triphosphatase 1 (NTP3), found in Toxoplasma gondii.